The sequence spans 529 residues: Tyrosinase (529 aa).

The first 18 residues, M1–G18, serve as a signal peptide directing secretion. Residues H19–S476 lie on the Lumenal, melanosome side of the membrane. N-linked (GlcNAc...) asparagine glycosylation is found at N86, N111, and N161. Residues H180, H202, and H211 each coordinate Cu cation. N-linked (GlcNAc...) asparagine glycosylation is present at N230. The disordered stretch occupies residues S287–P313. Residue N337 is glycosylated (N-linked (GlcNAc...) asparagine). H363 and H367 together coordinate Cu cation. Residue N371 is glycosylated (N-linked (GlcNAc...) asparagine). H390 contributes to the Cu cation binding site. Residues W477–S497 traverse the membrane as a helical segment. At L498–L529 the chain is on the cytoplasmic side.

This sequence belongs to the tyrosinase family. As to quaternary structure, forms an OPN3-dependent complex with DCT in response to blue light in melanocytes. Cu(2+) serves as cofactor. In terms of processing, glycosylated.

It is found in the melanosome membrane. Its subcellular location is the melanosome. The catalysed reaction is 2 L-dopa + O2 = 2 L-dopaquinone + 2 H2O. The enzyme catalyses L-tyrosine + O2 = L-dopaquinone + H2O. It catalyses the reaction 2 5,6-dihydroxyindole-2-carboxylate + O2 = 2 indole-5,6-quinone-2-carboxylate + 2 H2O. This is a copper-containing oxidase that functions in the formation of pigments such as melanins and other polyphenolic compounds. Catalyzes the initial and rate limiting step in the cascade of reactions leading to melanin production from tyrosine. In addition to hydroxylating tyrosine to DOPA (3,4-dihydroxyphenylalanine), also catalyzes the oxidation of DOPA to DOPA-quinone, and possibly the oxidation of DHI (5,6-dihydroxyindole) to indole-5,6 quinone. The sequence is that of Tyrosinase from Homo sapiens (Human).